A 524-amino-acid polypeptide reads, in one-letter code: Solute carrier family 40 member 1 (524 aa).

A compositionally biased stretch (basic and acidic residues) spans 1 to 18; sequence MENETELRVVHQEEQQRE. The interval 1-30 is disordered; the sequence is MENETELRVVHQEEQQREEGEDESQPQNPP. 11 helical membrane-spanning segments follow: residues 70-92, 109-129, 137-157, 191-211, 218-238, 314-334, 347-367, 380-400, 409-429, 446-466, and 472-492; these read SLLL…GPIV, LLFQ…LLLV, LPVF…GVLS, GIDL…ISFV, ITFA…FISV, VVLP…FGTL, YIIG…TLVY, GLWS…SIWV, MLMA…LAVI, GVQN…GIIV, and FWIL…LYTI.

The protein belongs to the ferroportin (FP) (TC 2.A.100) family. SLC40A subfamily.

It is found in the membrane. In terms of biological role, may be involved in iron transport and iron homeostasis. In Arabidopsis thaliana (Mouse-ear cress), this protein is Solute carrier family 40 member 1 (IREG1).